The sequence spans 781 residues: Arf-GAP with coiled-coil, ANK repeat and PH domain-containing protein 2 (781 aa).

In terms of domain architecture, BAR spans 1-226 (MKVTVDFEEC…MKDLGAQLDQ (226 aa)). In terms of domain architecture, PH spans 266–361 (GIVMEGYLFK…WIKAVQTSIA (96 aa)). Over residues 365–378 (REKGDESEKQEKKS) the composition is skewed to basic and acidic residues. Residues 365-390 (REKGDESEKQEKKSSPSTGSLESGSE) form a disordered region. Low complexity predominate over residues 379-388 (SPSTGSLESG). In terms of domain architecture, Arf-GAP spans 399 to 521 (ESALQRVQCI…KFVEKQPAAA (123 aa)). The segment at 414 to 437 (CCDCGLADPRWASINLGITLCIEC) adopts a C4-type zinc-finger fold. The segment at 520–576 (AAVSPLESRTKVLPQSQEEKRHSAPEKSFLAIEQGAASPRVRSSDSGIQQSVDDSRE) is disordered. ANK repeat units lie at residues 642–671 (NKATPLIQAVRGGSLVTCEFLLQNGANVNI), 675–704 (KGRGPLHHATVLGHTGQVCLFLKRGANQHA), and 708–737 (DGKDPLSIAVEAANADIVTLLRLARMNEEM).

It is found in the endosome membrane. Its subcellular location is the cell membrane. Its activity is regulated as follows. GAP activity stimulated by phosphatidylinositol 4,5-bisphosphate (PIP2) and phosphatidic acid. Its function is as follows. GTPase-activating protein (GAP) for ADP ribosylation factor 6 (ARF6). In Gallus gallus (Chicken), this protein is Arf-GAP with coiled-coil, ANK repeat and PH domain-containing protein 2 (ACAP2).